The following is a 711-amino-acid chain: Polyribonucleotide nucleotidyltransferase (711 aa).

The interval 77–80 (FFRR) is FFRR loop; important for RNA binding. The tract at residues 327 to 331 (LDVRT) is interaction with RNase E. Mg(2+) contacts are provided by Asp486 and Asp492. The region spanning 553–612 (PRIHTIKINPDKIKDVIGKGGSVIRALTEETGTTIEIEDDGTVKIAATDGEKAKHAIRRI) is the KH domain. Residues 622-690 (GRVYTGKVTR…RQGRIRLSIK (69 aa)) form the S1 motif domain. The interval 689 to 711 (IKEATEQSQPAAAPEAPAAEQGE) is disordered. Low complexity predominate over residues 694–711 (EQSQPAAAPEAPAAEQGE).

It belongs to the polyribonucleotide nucleotidyltransferase family. As to quaternary structure, component of the RNA degradosome, which is a multiprotein complex involved in RNA processing and mRNA degradation. Interacts with RNase E (rne). Homotrimer. The homotrimer forms a ring-like structure with a central channel, where RNA molecules can bind. RNA molecules bind between neighboring subunits. Might interact with YicC. The cofactor is Mg(2+). Mn(2+) serves as cofactor.

It is found in the cytoplasm. The catalysed reaction is RNA(n+1) + phosphate = RNA(n) + a ribonucleoside 5'-diphosphate. In terms of biological role, involved in mRNA degradation. Catalyzes the phosphorolysis of single-stranded polyribonucleotides processively in the 3'- to 5'-direction. Also involved, along with RNase II, in tRNA processing. RNases II and R contribute to rRNA degradation during starvation, while RNase R and PNPase are the major contributors to quality control of rRNA during steady state growth. Contributes to degradation of some small RNAs (sRNA). This is Polyribonucleotide nucleotidyltransferase from Escherichia coli (strain K12).